Here is a 350-residue protein sequence, read N- to C-terminus: tRNA uridine(34) hydroxylase (350 aa).

Residues 146–240 (DDPDAVFIDM…YARRAREQGL (95 aa)) enclose the Rhodanese domain. The active-site Cysteine persulfide intermediate is the C200. A compositionally biased stretch (basic and acidic residues) spans 319-328 (RRRRAGRENG). The interval 319-350 (RRRRAGRENGNKIFNKSRGRLNSKLSIPDPAE) is disordered.

Belongs to the TrhO family.

It catalyses the reaction uridine(34) in tRNA + AH2 + O2 = 5-hydroxyuridine(34) in tRNA + A + H2O. Its function is as follows. Catalyzes oxygen-dependent 5-hydroxyuridine (ho5U) modification at position 34 in tRNAs. This Salmonella schwarzengrund (strain CVM19633) protein is tRNA uridine(34) hydroxylase.